The primary structure comprises 89 residues: UPF0237 protein Cgl1544/cg1742 (89 aa).

The region spanning 4-82 (IMTVTGQDHT…LVIRIQSEAL (79 aa)) is the ACT domain.

Belongs to the UPF0237 family.

The chain is UPF0237 protein Cgl1544/cg1742 from Corynebacterium glutamicum (strain ATCC 13032 / DSM 20300 / JCM 1318 / BCRC 11384 / CCUG 27702 / LMG 3730 / NBRC 12168 / NCIMB 10025 / NRRL B-2784 / 534).